The sequence spans 491 residues: Dipeptide and tripeptide permease B (491 aa).

The Cytoplasmic portion of the chain corresponds to methionine 1–arginine 26. The helical transmembrane segment at phenylalanine 27–serine 47 threads the bilayer. Residues glutamine 48–alanine 51 are Periplasmic-facing. Residues phenylalanine 52–valine 72 traverse the membrane as a helical segment. Residues glycine 73–arginine 81 are Cytoplasmic-facing. A helical membrane pass occupies residues threonine 82–leucine 102. At lysine 103 to glutamate 105 the chain is on the periplasmic side. The helical transmembrane segment at methionine 106–alanine 126 threads the bilayer. The Cytoplasmic portion of the chain corresponds to serine 127–threonine 145. Residues leucine 146–alanine 166 traverse the membrane as a helical segment. Topologically, residues glutamate 167–tyrosine 171 are periplasmic. The chain crosses the membrane as a helical span at residues alanine 172–cysteine 192. The Cytoplasmic segment spans residues arginine 193–tyrosine 210. A helical membrane pass occupies residues glycine 211–methionine 231. Position 232 (histidine 232) is a topological domain, periplasmic. Residues asparagine 233–phenylalanine 253 form a helical membrane-spanning segment. The Cytoplasmic segment spans residues arginine 254 to arginine 266. A helical transmembrane segment spans residues methionine 267 to methionine 287. Topologically, residues proline 288–serine 312 are periplasmic. A helical membrane pass occupies residues phenylalanine 313–leucine 335. At glycine 336 to threonine 349 the chain is on the cytoplasmic side. A helical transmembrane segment spans residues leucine 350 to alanine 370. The Periplasmic segment spans residues aspartate 371–proline 378. Residues tryptophan 379–glycine 399 form a helical membrane-spanning segment. The Cytoplasmic portion of the chain corresponds to leucine 400–glutamine 423. A helical transmembrane segment spans residues alanine 424–histidine 444. Residues aspartate 445–threonine 454 lie on the Periplasmic side of the membrane. A helical membrane pass occupies residues glycine 455 to valine 475. Residues proline 476–alanine 491 lie on the Cytoplasmic side of the membrane.

The protein belongs to the major facilitator superfamily. Proton-dependent oligopeptide transporter (POT/PTR) (TC 2.A.17) family. DtpB subfamily.

The protein localises to the cell inner membrane. In terms of biological role, proton-dependent permease that transports di- and tripeptides. The polypeptide is Dipeptide and tripeptide permease B (Edwardsiella piscicida).